The following is a 224-amino-acid chain: Phosphoribosyltransferase domain-containing protein 1 (224 aa).

Mg(2+) is bound by residues glutamate 140 and aspartate 141. GMP contacts are provided by residues 140–148 (EDIINTGRT), lysine 172, 193–194 (FV), and aspartate 200. A Mg(2+)-binding site is contributed by aspartate 200.

This sequence belongs to the purine/pyrimidine phosphoribosyltransferase family.

In Xenopus laevis (African clawed frog), this protein is Phosphoribosyltransferase domain-containing protein 1 (prtfdc1).